Consider the following 60-residue polypeptide: Large ribosomal subunit protein uL30 (60 aa).

Belongs to the universal ribosomal protein uL30 family. In terms of assembly, part of the 50S ribosomal subunit.

The chain is Large ribosomal subunit protein uL30 from Pediococcus pentosaceus (strain ATCC 25745 / CCUG 21536 / LMG 10740 / 183-1w).